The following is a 313-amino-acid chain: Methylenetetrahydrofolate dehydrogenase [NAD(+)] (313 aa).

The active site involves cysteine 152. NAD(+) contacts are provided by residues 187 to 188 (RS), 210 to 211 (DI), and 270 to 272 (FAG).

It belongs to the tetrahydrofolate dehydrogenase/cyclohydrolase family. Homodimer.

The catalysed reaction is (6R)-5,10-methylene-5,6,7,8-tetrahydrofolate + NAD(+) = (6R)-5,10-methenyltetrahydrofolate + NADH. It functions in the pathway one-carbon metabolism; tetrahydrofolate interconversion. Its function is as follows. Catalyzes oxidation of cytoplasmic one-carbon units for purine biosynthesis. This chain is Methylenetetrahydrofolate dehydrogenase [NAD(+)] (thfA), found in Dictyostelium discoideum (Social amoeba).